The sequence spans 748 residues: NAD(P)H-quinone oxidoreductase subunit 5, chloroplastic (748 aa).

A run of 16 helical transmembrane segments spans residues 9 to 29, 40 to 60, 89 to 109, 121 to 140, 147 to 167, 185 to 205, 224 to 244, 258 to 278, 280 to 300, 327 to 347, 354 to 374, 396 to 416, 425 to 445, 551 to 571, 605 to 625, and 726 to 746; these read WIIP…LLLV, WAFP…DLSI, IDPL…MVLV, YLRF…GLVT, IYIF…FWFT, GDFG…SFEF, LFVT…SAQF, TPIS…FLVA, LFPL…IGII, LGYT…FHLI, ALLF…VGYS, TAFL…CFWS, WLYS…TAFY, LLPL…GIPF, FITN…IASL, and YLFL…FLFL.

This sequence belongs to the complex I subunit 5 family. As to quaternary structure, NDH is composed of at least 16 different subunits, 5 of which are encoded in the nucleus.

It localises to the plastid. It is found in the chloroplast thylakoid membrane. The catalysed reaction is a plastoquinone + NADH + (n+1) H(+)(in) = a plastoquinol + NAD(+) + n H(+)(out). The enzyme catalyses a plastoquinone + NADPH + (n+1) H(+)(in) = a plastoquinol + NADP(+) + n H(+)(out). Its function is as follows. NDH shuttles electrons from NAD(P)H:plastoquinone, via FMN and iron-sulfur (Fe-S) centers, to quinones in the photosynthetic chain and possibly in a chloroplast respiratory chain. The immediate electron acceptor for the enzyme in this species is believed to be plastoquinone. Couples the redox reaction to proton translocation, and thus conserves the redox energy in a proton gradient. The sequence is that of NAD(P)H-quinone oxidoreductase subunit 5, chloroplastic (ndhF) from Platanus occidentalis (Sycamore).